Consider the following 649-residue polypeptide: Solute carrier family 22 member 17 (649 aa).

The segment at 1-70 (MAPRVATGTP…GGDGLGSSLS (70 aa)) is disordered. Residues 24–34 (VEITPTSNGQV) show a composition bias toward polar residues. Residues 47-57 (QGEREREREGE) are compositionally biased toward basic and acidic residues. Residues N134 and N143 are each glycosylated (N-linked (GlcNAc...) asparagine). Helical transmembrane passes span 211–231 (VILE…FLGY), 240–260 (GIVL…AAAG), 265–285 (VMAL…GVYL), 300–320 (ALAG…LALV), 330–350 (MITA…FLES), 414–433 (NIWK…HAIR), 448–468 (FYLC…FLGV), 477–497 (GILL…LGLW), 526–546 (FSVL…LLAA), 557–577 (GLGL…AQRL), and 584–604 (FLQH…IMLL).

Belongs to the major facilitator (TC 2.A.1) superfamily. Organic cation transporter (TC 2.A.1.19) family. As to expression, expressed in brain.

It localises to the cell membrane. The protein localises to the vacuole membrane. In terms of biological role, cell surface receptor for LCN2 (24p3) that plays a key role in iron homeostasis and transport. Able to bind iron-bound LCN2 (holo-24p3), followed by internalization of holo-24p3 and release of iron, thereby increasing intracellular iron concentration and leading to inhibition of apoptosis. Also binds iron-free LCN2 (apo-24p3), followed by internalization of apo-24p3 and its association with an intracellular siderophore, leading to iron chelation and iron transfer to the extracellular medium, thereby reducing intracellular iron concentration and resulting in apoptosis. The protein is Solute carrier family 22 member 17 (SLC22A17) of Homo sapiens (Human).